Here is a 1201-residue protein sequence, read N- to C-terminus: Stress response protein nst1 (1201 aa).

7 disordered regions span residues M1 to L178, N268 to E341, Q429 to V478, E535 to L707, I724 to N848, Q899 to V952, and E1150 to I1169. The segment covering N40–Q50 has biased composition (basic residues). Positions V84–P114 are enriched in basic and acidic residues. The span at N116–T128 shows a compositional bias: polar residues. Over residues R130 to R141 the composition is skewed to basic residues. Polar residues-rich tracts occupy residues Q145–Q164 and G293–F302. 2 stretches are compositionally biased toward acidic residues: residues P313–E341 and D441–M466. The stretch at K520–L673 forms a coiled coil. Basic and acidic residues-rich tracts occupy residues E535–K553 and Q563–A692. Residues Q740–P767 are compositionally biased toward polar residues. Composition is skewed to low complexity over residues S769–L805 and P926–S938.

The protein belongs to the NST1 family.

The protein localises to the cytoplasm. Its function is as follows. May act as a negative regulator of salt tolerance. In Aspergillus niger (strain ATCC MYA-4892 / CBS 513.88 / FGSC A1513), this protein is Stress response protein nst1 (nst1).